Reading from the N-terminus, the 181-residue chain is Trafficking protein particle complex subunit 3 homolog (181 aa).

Cys-70 is lipidated: S-palmitoyl cysteine.

This sequence belongs to the TRAPP small subunits family. BET3 subfamily. In terms of assembly, homodimer. Part of the multisubunit TRAPP (transport protein particle) complex.

It localises to the golgi apparatus. Its subcellular location is the cis-Golgi network. The protein localises to the endoplasmic reticulum. May play a role in vesicular transport from endoplasmic reticulum to Golgi. Required for the systemic spread of the RNAi response. The polypeptide is Trafficking protein particle complex subunit 3 homolog (Caenorhabditis briggsae).